Here is a 61-residue protein sequence, read N- to C-terminus: Tubulin alpha-4 chain (61 aa).

Residue Gln11 coordinates GTP. A disordered region spans residues 35–61 (QMPGDKTIGGGDAEFDEGEDGDEGDEY). Lys40 bears the N6-acetyllysine mark. A compositionally biased stretch (acidic residues) spans 47–61 (AEFDEGEDGDEGDEY).

Belongs to the tubulin family. In terms of assembly, dimer of alpha and beta chains. A typical microtubule is a hollow water-filled tube with an outer diameter of 25 nm and an inner diameter of 15 nM. Alpha-beta heterodimers associate head-to-tail to form protofilaments running lengthwise along the microtubule wall with the beta-tubulin subunit facing the microtubule plus end conferring a structural polarity. Microtubules usually have 13 protofilaments but different protofilament numbers can be found in some organisms and specialized cells. Requires Mg(2+) as cofactor. Post-translationally, undergoes a tyrosination/detyrosination cycle, the cyclic removal and re-addition of a C-terminal tyrosine residue by the enzymes tubulin tyrosine carboxypeptidase (TTCP) and tubulin tyrosine ligase (TTL), respectively. In terms of processing, acetylation of alpha chains at Lys-40 stabilizes microtubules and affects affinity and processivity of microtubule motors. This modification has a role in multiple cellular functions, ranging from cell motility, cell cycle progression or cell differentiation to intracellular trafficking and signaling.

The protein resides in the cytoplasm. It is found in the cytoskeleton. The catalysed reaction is GTP + H2O = GDP + phosphate + H(+). Functionally, tubulin is the major constituent of microtubules, a cylinder consisting of laterally associated linear protofilaments composed of alpha- and beta-tubulin heterodimers. Microtubules grow by the addition of GTP-tubulin dimers to the microtubule end, where a stabilizing cap forms. Below the cap, tubulin dimers are in GDP-bound state, owing to GTPase activity of alpha-tubulin. This is Tubulin alpha-4 chain (TUBA4) from Zea mays (Maize).